The chain runs to 380 residues: 1-deoxy-D-xylulose 5-phosphate reductoisomerase (380 aa).

Thr-10, Gly-11, Ser-12, Ile-13, Gly-36, Arg-37, Asn-38, and Asn-120 together coordinate NADPH. Residue Lys-121 participates in 1-deoxy-D-xylulose 5-phosphate binding. Glu-122 serves as a coordination point for NADPH. Asp-146 contributes to the Mn(2+) binding site. 1-deoxy-D-xylulose 5-phosphate is bound by residues Ser-147, Glu-148, Ser-172, and His-195. Glu-148 lines the Mn(2+) pocket. Gly-201 provides a ligand contact to NADPH. 4 residues coordinate 1-deoxy-D-xylulose 5-phosphate: Ser-208, Asn-213, Lys-214, and Glu-217. Glu-217 provides a ligand contact to Mn(2+).

It belongs to the DXR family. Requires Mg(2+) as cofactor. It depends on Mn(2+) as a cofactor.

The enzyme catalyses 2-C-methyl-D-erythritol 4-phosphate + NADP(+) = 1-deoxy-D-xylulose 5-phosphate + NADPH + H(+). It participates in isoprenoid biosynthesis; isopentenyl diphosphate biosynthesis via DXP pathway; isopentenyl diphosphate from 1-deoxy-D-xylulose 5-phosphate: step 1/6. Functionally, catalyzes the NADPH-dependent rearrangement and reduction of 1-deoxy-D-xylulose-5-phosphate (DXP) to 2-C-methyl-D-erythritol 4-phosphate (MEP). This Listeria monocytogenes serovar 1/2a (strain ATCC BAA-679 / EGD-e) protein is 1-deoxy-D-xylulose 5-phosphate reductoisomerase.